Reading from the N-terminus, the 87-residue chain is Phosphocarrier protein HPr (87 aa).

Residues Ala-2–Ala-87 enclose the HPr domain. Catalysis depends on His-15, which acts as the Pros-phosphohistidine intermediate. Position 46 is a phosphoserine; by HPrK/P (Ser-46).

The protein belongs to the HPr family.

It is found in the cytoplasm. Phosphorylation on Ser-46 inhibits the phosphoryl transfer from enzyme I to HPr. General (non sugar-specific) component of the phosphoenolpyruvate-dependent sugar phosphotransferase system (sugar PTS). This major carbohydrate active-transport system catalyzes the phosphorylation of incoming sugar substrates concomitantly with their translocation across the cell membrane. The phosphoryl group from phosphoenolpyruvate (PEP) is transferred to the phosphoryl carrier protein HPr by enzyme I. Phospho-HPr then transfers it to the PTS EIIA domain. Functionally, P-Ser-HPr interacts with the catabolite control protein A (CcpA), forming a complex that binds to DNA at the catabolite response elements cre, operator sites preceding a large number of catabolite-regulated genes. Thus, P-Ser-HPr is a corepressor in carbon catabolite repression (CCR), a mechanism that allows bacteria to coordinate and optimize the utilization of available carbon sources. P-Ser-HPr also plays a role in inducer exclusion, in which it probably interacts with several non-PTS permeases and inhibits their transport activity. This Streptococcus mutans serotype c (strain ATCC 700610 / UA159) protein is Phosphocarrier protein HPr (ptsH).